Reading from the N-terminus, the 309-residue chain is HPr kinase/phosphorylase (309 aa).

Residues H138 and K159 contribute to the active site. An ATP-binding site is contributed by 153–160 (GDSGIGKS). S160 lines the Mg(2+) pocket. The active-site Proton acceptor; for phosphorylation activity. Proton donor; for dephosphorylation activity is the D177. The segment at 201–210 (LEIRGVGIID) is important for the catalytic mechanism of both phosphorylation and dephosphorylation. Mg(2+) is bound at residue E202. The active site involves R243. The important for the catalytic mechanism of dephosphorylation stretch occupies residues 264 to 269 (PVKTGR).

It belongs to the HPrK/P family. As to quaternary structure, homohexamer. It depends on Mg(2+) as a cofactor.

It carries out the reaction [HPr protein]-L-serine + ATP = [HPr protein]-O-phospho-L-serine + ADP + H(+). The enzyme catalyses [HPr protein]-O-phospho-L-serine + phosphate + H(+) = [HPr protein]-L-serine + diphosphate. Functionally, catalyzes the ATP- as well as the pyrophosphate-dependent phosphorylation of a specific serine residue in HPr, a phosphocarrier protein of the phosphoenolpyruvate-dependent sugar phosphotransferase system (PTS). HprK/P also catalyzes the pyrophosphate-producing, inorganic phosphate-dependent dephosphorylation (phosphorolysis) of seryl-phosphorylated HPr (P-Ser-HPr). The two antagonistic activities of HprK/P are regulated by several intracellular metabolites, which change their concentration in response to the absence or presence of rapidly metabolisable carbon sources (glucose, fructose, etc.) in the growth medium. Therefore, by controlling the phosphorylation state of HPr, HPrK/P is a sensor enzyme that plays a major role in the regulation of carbon metabolism and sugar transport: it mediates carbon catabolite repression (CCR), and regulates PTS-catalyzed carbohydrate uptake and inducer exclusion. The sequence is that of HPr kinase/phosphorylase from Streptococcus thermophilus (strain ATCC BAA-491 / LMD-9).